The sequence spans 242 residues: Phosphoribosylaminoimidazole-succinocarboxamide synthase (242 aa).

Belongs to the SAICAR synthetase family.

It carries out the reaction 5-amino-1-(5-phospho-D-ribosyl)imidazole-4-carboxylate + L-aspartate + ATP = (2S)-2-[5-amino-1-(5-phospho-beta-D-ribosyl)imidazole-4-carboxamido]succinate + ADP + phosphate + 2 H(+). Its pathway is purine metabolism; IMP biosynthesis via de novo pathway; 5-amino-1-(5-phospho-D-ribosyl)imidazole-4-carboxamide from 5-amino-1-(5-phospho-D-ribosyl)imidazole-4-carboxylate: step 1/2. The sequence is that of Phosphoribosylaminoimidazole-succinocarboxamide synthase from Prochlorococcus marinus subsp. pastoris (strain CCMP1986 / NIES-2087 / MED4).